The sequence spans 105 residues: UPF0060 membrane protein Rmet_4032 (105 aa).

4 helical membrane-spanning segments follow: residues 4-24, 28-48, 60-80, and 82-102; these read VGLYLLTALAEILGCYLPYLW, GASPWVLLPGAASLAVFAWLL, AAYGGVYIAMAIAWLWAVDGV, and PSPWDIAGVAVALGGMAIIVF.

Belongs to the UPF0060 family.

It is found in the cell inner membrane. The protein is UPF0060 membrane protein Rmet_4032 of Cupriavidus metallidurans (strain ATCC 43123 / DSM 2839 / NBRC 102507 / CH34) (Ralstonia metallidurans).